We begin with the raw amino-acid sequence, 929 residues long: Bifunctional uridylyltransferase/uridylyl-removing enzyme (929 aa).

Residues 1–383 are uridylyltransferase; the sequence is MDSVTTEHKQ…RPTPAKRRVP (383 aa). The segment at 384–739 is uridylyl-removing; that stretch reads DSDDFIVDNN…VGFDEVRGVT (356 aa). The region spanning 499 to 622 is the HD domain; sequence VDEHLIRCVG…VQSVEQMKLL (124 aa). ACT domains lie at 740–822 and 850–927; these read ELTI…VVAR and VIEV…AVQP.

It belongs to the GlnD family. Mg(2+) is required as a cofactor.

It carries out the reaction [protein-PII]-L-tyrosine + UTP = [protein-PII]-uridylyl-L-tyrosine + diphosphate. It catalyses the reaction [protein-PII]-uridylyl-L-tyrosine + H2O = [protein-PII]-L-tyrosine + UMP + H(+). With respect to regulation, uridylyltransferase (UTase) activity is inhibited by glutamine, while glutamine activates uridylyl-removing (UR) activity. In terms of biological role, modifies, by uridylylation and deuridylylation, the PII regulatory proteins (GlnB and homologs), in response to the nitrogen status of the cell that GlnD senses through the glutamine level. Under low glutamine levels, catalyzes the conversion of the PII proteins and UTP to PII-UMP and PPi, while under higher glutamine levels, GlnD hydrolyzes PII-UMP to PII and UMP (deuridylylation). Thus, controls uridylylation state and activity of the PII proteins, and plays an important role in the regulation of nitrogen fixation and metabolism. The chain is Bifunctional uridylyltransferase/uridylyl-removing enzyme from Bradyrhizobium diazoefficiens (strain JCM 10833 / BCRC 13528 / IAM 13628 / NBRC 14792 / USDA 110).